The chain runs to 379 residues: S-adenosylmethionine decarboxylase proenzyme (379 aa).

Residues E30 and E33 contribute to the active site. The Schiff-base intermediate with substrate; via pyruvic acid role is filled by S96. The residue at position 96 (S96) is a Pyruvic acid (Ser); by autocatalysis. Residue C110 is the Proton donor; for catalytic activity of the active site. Catalysis depends on proton acceptor; for processing activity residues S254 and H267.

This sequence belongs to the eukaryotic AdoMetDC family. In terms of assembly, heterotetramer of two alpha and two beta chains. It depends on pyruvate as a cofactor. In terms of processing, is synthesized initially as an inactive proenzyme. Formation of the active enzyme involves a self-maturation process in which the active site pyruvoyl group is generated from an internal serine residue via an autocatalytic post-translational modification. Two non-identical subunits are generated from the proenzyme in this reaction, and the pyruvate is formed at the N-terminus of the alpha chain, which is derived from the carboxyl end of the proenzyme. The post-translation cleavage follows an unusual pathway, termed non-hydrolytic serinolysis, in which the side chain hydroxyl group of the serine supplies its oxygen atom to form the C-terminus of the beta chain, while the remainder of the serine residue undergoes an oxidative deamination to produce ammonia and the pyruvoyl group blocking the N-terminus of the alpha chain.

It catalyses the reaction S-adenosyl-L-methionine + H(+) = S-adenosyl 3-(methylsulfanyl)propylamine + CO2. Its pathway is amine and polyamine biosynthesis; S-adenosylmethioninamine biosynthesis; S-adenosylmethioninamine from S-adenosyl-L-methionine: step 1/1. Functionally, S-adenosylmethionine decarboxylase is essential for the biosynthesis of spermine and spermidine. The alpha subunit contains the active site. The polypeptide is S-adenosylmethionine decarboxylase proenzyme (amd1) (Dictyostelium discoideum (Social amoeba)).